A 560-amino-acid chain; its full sequence is Transcription termination factor 5, mitochondrial (560 aa).

Residues 1 to 23 (MLRNGQNQAQLLARSLGQLARGM) constitute a mitochondrion transit peptide. The segment at 23–47 (MASSKRVSSKKEDLKPKLPKPPTVE) is disordered.

The protein belongs to the mTERF family. Probably binds to the mTTF-DNA complex.

Its subcellular location is the mitochondrion. In terms of biological role, binds promoter DNA and regulates initiation of transcription. Regulates mitochondrial replication and transcription. Required for normal topology and maintenance of mitochondrial DNA (mtDNA) levels. Regulates mtDNA replication by re-activating replication after replication pausing. Likely to regulate replication pausing by coordinating with the mitochondrial termination factor mTTF which promotes replication pausing. Their function in replication pausing prevents unregulated replication that may occur for example by collisions between the machineries of DNA replication and transcription during mtDNA synthesis. This ensures the incorporation of RNA transcripts into replication intermediates at the replication fork and allows for proper fork progression. Possibly functions downstream of Dref which activates genes involved in mtDNA replication and maintenance. The protein is Transcription termination factor 5, mitochondrial of Drosophila melanogaster (Fruit fly).